Reading from the N-terminus, the 116-residue chain is Large ribosomal subunit protein bL19 (116 aa).

The protein belongs to the bacterial ribosomal protein bL19 family.

Functionally, this protein is located at the 30S-50S ribosomal subunit interface and may play a role in the structure and function of the aminoacyl-tRNA binding site. This Solidesulfovibrio magneticus (strain ATCC 700980 / DSM 13731 / RS-1) (Desulfovibrio magneticus) protein is Large ribosomal subunit protein bL19.